Consider the following 321-residue polypeptide: Transcriptional activator protein Pur-alpha (321 aa).

A disordered region spans residues Met-1–Gln-54. The residue at position 2 (Ala-2) is an N-acetylalanine. Residues Glu-9–Gly-51 show a composition bias toward gly residues. A Phosphoserine modification is found at Ser-181. Positions Leu-294–Gln-313 are enriched in low complexity. Residues Leu-294 to Asp-321 form a disordered region.

It belongs to the PUR DNA-binding protein family. As to quaternary structure, homodimer, heterodimer with PURB and heterotrimer with PURB and YBX1/Y-box protein 1. Interacts with FMR1; this interaction occurs in association with polyribosome.

Its subcellular location is the nucleus. Functionally, this is a probable transcription activator that specifically binds the purine-rich single strand of the PUR element located upstream of the c-Myc gene. May play a role in the initiation of DNA replication and in recombination. This Mus musculus (Mouse) protein is Transcriptional activator protein Pur-alpha (Pura).